Here is a 154-residue protein sequence, read N- to C-terminus: Low molecular weight protein-tyrosine-phosphatase PtpA (154 aa).

Cysteine 8 serves as the catalytic Nucleophile. Arginine 14 is an active-site residue. Aspartate 120 functions as the Proton donor in the catalytic mechanism.

It belongs to the low molecular weight phosphotyrosine protein phosphatase family. Interacts with host CORO1A. Phosphorylations at Tyr-122 and Tyr-123 are essential for phosphatase activity.

The protein localises to the secreted. It carries out the reaction O-phospho-L-tyrosyl-[protein] + H2O = L-tyrosyl-[protein] + phosphate. Functionally, secreted tyrosine phosphatase that plays a critical role during infection as a bacterial effector protein that counteracts host defenses. Required for intramacrophage survival. The chain is Low molecular weight protein-tyrosine-phosphatase PtpA (ptpA) from Staphylococcus aureus (strain bovine RF122 / ET3-1).